We begin with the raw amino-acid sequence, 223 residues long: Deoxyribose-phosphate aldolase (223 aa).

D92 acts as the Proton donor/acceptor in catalysis. K154 serves as the catalytic Schiff-base intermediate with acetaldehyde. The active-site Proton donor/acceptor is K182.

Belongs to the DeoC/FbaB aldolase family. DeoC type 1 subfamily.

Its subcellular location is the cytoplasm. The enzyme catalyses 2-deoxy-D-ribose 5-phosphate = D-glyceraldehyde 3-phosphate + acetaldehyde. Its pathway is carbohydrate degradation; 2-deoxy-D-ribose 1-phosphate degradation; D-glyceraldehyde 3-phosphate and acetaldehyde from 2-deoxy-alpha-D-ribose 1-phosphate: step 2/2. Catalyzes a reversible aldol reaction between acetaldehyde and D-glyceraldehyde 3-phosphate to generate 2-deoxy-D-ribose 5-phosphate. In Haemophilus influenzae (strain 86-028NP), this protein is Deoxyribose-phosphate aldolase.